The primary structure comprises 432 residues: Cytochrome c biogenesis protein CcsB (432 aa).

Transmembrane regions (helical) follow at residues 18–38 (LRLAIVLLLLIALASAVGTGI), 76–96 (SGWFLALLAWLGLALILCSWR), and 166–186 (VGPLLVHTGLVLLMLGAAWGA).

The protein belongs to the Ccs1/CcsB family. As to quaternary structure, may interact with CcsA.

Its subcellular location is the cellular thylakoid membrane. Functionally, required during biogenesis of c-type cytochromes (cytochrome c6 and cytochrome f) at the step of heme attachment. This chain is Cytochrome c biogenesis protein CcsB, found in Synechococcus sp. (strain CC9605).